The sequence spans 131 residues: Protein ApaG (131 aa).

The ApaG domain occupies 7–131 (PVKPYDLTVS…FLLAMPRTLH (125 aa)).

This is Protein ApaG from Bordetella bronchiseptica (strain ATCC BAA-588 / NCTC 13252 / RB50) (Alcaligenes bronchisepticus).